A 481-amino-acid polypeptide reads, in one-letter code: Fibrinogen beta chain (481 aa).

Residues M1–A19 form the signal peptide. The interval D22–D81 is disordered. The segment covering L31–P47 has biased composition (basic and acidic residues). A beta-chain polymerization, binding distal domain of another fibrin region spans residues G35–R37. Residues Q149 to C213 are a coiled coil. Cystine bridges form between C221-C306 and C231-C260. In terms of domain architecture, Fibrinogen C-terminal spans N222–F478. N384 carries N-linked (GlcNAc...) asparagine glycosylation. A disulfide bridge connects residues C414 and C427.

As to quaternary structure, heterohexamer; disulfide linked. Contains 2 sets of 3 non-identical chains (alpha, beta and gamma). The 2 heterotrimers are in head to head conformation with the N-termini in a small central domain. Post-translationally, conversion of fibrinogen to fibrin is triggered by thrombin, which cleaves fibrinopeptides A and B from alpha and beta chains, and thus exposes the N-terminal polymerization sites responsible for the formation of the soft clot.

Its subcellular location is the secreted. In terms of biological role, cleaved by the protease thrombin to yield monomers which, together with fibrinogen alpha (FGA) and fibrinogen gamma (FGG), polymerize to form an insoluble fibrin matrix. Fibrin has a major function in hemostasis as one of the primary components of blood clots. In addition, functions during the early stages of wound repair to stabilize the lesion and guide cell migration during re-epithelialization. Was originally thought to be essential for platelet aggregation, based on in vitro studies using anticoagulated blood. However, subsequent studies have shown that it is not absolutely required for thrombus formation in vivo. Enhances expression of SELP in activated platelets via an ITGB3-dependent pathway. Maternal fibrinogen is essential for successful pregnancy. Fibrin deposition is also associated with infection, where it protects against IFNG-mediated hemorrhage. May also facilitate the immune response via both innate and T-cell mediated pathways. This Mus musculus (Mouse) protein is Fibrinogen beta chain (Fgb).